The sequence spans 141 residues: ATP synthase epsilon chain (141 aa).

This sequence belongs to the ATPase epsilon chain family. F-type ATPases have 2 components, CF(1) - the catalytic core - and CF(0) - the membrane proton channel. CF(1) has five subunits: alpha(3), beta(3), gamma(1), delta(1), epsilon(1). CF(0) has three main subunits: a, b and c.

The protein localises to the cell inner membrane. Its function is as follows. Produces ATP from ADP in the presence of a proton gradient across the membrane. This Cellvibrio japonicus (strain Ueda107) (Pseudomonas fluorescens subsp. cellulosa) protein is ATP synthase epsilon chain.